A 153-amino-acid chain; its full sequence is MSSQTERTFIAVKPDGVQRGLVSQILSRFEKKGYKLVAIKLVKADDKLLEQHYAEHVGKPFFPKMVSFMKSGPILATVWEGKDVVRQGRTILGATNPLGSAPGTIRGDFGIDLGRNVCHGSDSVDSAEREINLWFKKEELVDWESNQAKWIYE.

6 residues coordinate ATP: lysine 13, phenylalanine 61, arginine 89, threonine 95, arginine 106, and asparagine 116. Threonine 95 carries the phosphothreonine modification. The Pros-phosphohistidine intermediate role is filled by histidine 119.

It belongs to the NDK family. As to quaternary structure, homohexamer and homotetramer. Interacts with TOM40 preferentially in an unfolded, unphosphorylated form. It depends on Mg(2+) as a cofactor. The N-terminus is blocked.

The protein resides in the cytoplasm. Its subcellular location is the mitochondrion intermembrane space. It catalyses the reaction a 2'-deoxyribonucleoside 5'-diphosphate + ATP = a 2'-deoxyribonucleoside 5'-triphosphate + ADP. It carries out the reaction a ribonucleoside 5'-diphosphate + ATP = a ribonucleoside 5'-triphosphate + ADP. Its function is as follows. Major role in the synthesis of nucleoside triphosphates other than ATP. The ATP gamma phosphate is transferred to the NDP beta phosphate via a ping-pong mechanism, using a phosphorylated active-site intermediate. Required for repair of UV radiation- and etoposide-induced DNA damage. This is Nucleoside diphosphate kinase (YNK1) from Saccharomyces cerevisiae (strain ATCC 204508 / S288c) (Baker's yeast).